The following is a 763-amino-acid chain: Eukaryotic translation initiation factor 3 subunit B (763 aa).

The segment at 1–136 (MKNFLPRTLK…LFVECGSMND (136 aa)) is sufficient for interaction with HCR1 and TIF32. Residues 28 to 261 (RNTQLKRSKI…GVTAWGGPNF (234 aa)) are sufficient for interaction with PIC8. A Phosphoserine modification is found at Ser61. Tyr67 carries the phosphotyrosine modification. The 86-residue stretch at 77 to 162 (QYIVVNGAPV…HRLFLYTMKD (86 aa)) folds into the RRM domain. WD repeat units lie at residues 228–266 (RENW…RLRR), 277–325 (VSPN…LMAT), 373–416 (LKPS…SACT), 484–524 (ELKD…IRFY), 544–589 (IPKT…EKNI), and 605–650 (PTYS…VKED). Ser669 carries the post-translational modification Phosphoserine.

This sequence belongs to the eIF-3 subunit B family. As to quaternary structure, the eukaryotic translation initiation factor 3 (eIF-3) core complex is composed of TIF32, PRT1, NIP1, TIF34 and TIF35. A subcomplex of TIF32, NIP1 and PRT1 mediates the interaction with eIF-1, TIF5/eIF-5 and HCR1. The factors eIF-1, eIF-2, eIF-3, TIF5/eIF-5 and methionyl-tRNAi form a multifactor complex (MFC) that may bind to the 40S ribosome.

The protein localises to the cytoplasm. In terms of biological role, RNA-binding component of the eukaryotic translation initiation factor 3 (eIF-3) complex, which is involved in protein synthesis of a specialized repertoire of mRNAs and, together with other initiation factors, stimulates binding of mRNA and methionyl-tRNAi to the 40S ribosome. The eIF-3 complex specifically targets and initiates translation of a subset of mRNAs involved in cell proliferation. The sequence is that of Eukaryotic translation initiation factor 3 subunit B from Saccharomyces cerevisiae (strain ATCC 204508 / S288c) (Baker's yeast).